The sequence spans 92 residues: PqqA binding protein (92 aa).

This sequence belongs to the PqqD family. As to quaternary structure, monomer. Interacts with PqqE.

It functions in the pathway cofactor biosynthesis; pyrroloquinoline quinone biosynthesis. Its function is as follows. Functions as a PqqA binding protein and presents PqqA to PqqE, in the pyrroloquinoline quinone (PQQ) biosynthetic pathway. This chain is PqqA binding protein, found in Azotobacter vinelandii (strain DJ / ATCC BAA-1303).